A 74-amino-acid chain; its full sequence is Cytochrome c oxidase assembly factor 5 (74 aa).

The CHCH domain occupies 27–65 (QSACVLQEGKSPRQCLKEGNCRALQYSFFECKRSMLDAR). Positions 30–41 (CVLQEGKSPRQC) match the Cx10C motif motif. Disulfide bonds link Cys30/Cys57 and Cys41/Cys47. Phosphoserine is present on Ser37. The Cx9C motif signature appears at 47–57 (CRALQYSFFEC).

This sequence belongs to the PET191 family.

Its function is as follows. Involved in an early step of the mitochondrial complex IV assembly process. The sequence is that of Cytochrome c oxidase assembly factor 5 (Coa5) from Mus musculus (Mouse).